Consider the following 204-residue polypeptide: Guanylate kinase (204 aa).

Positions 5–184 (GLLIVLSGPS…AVQRIKDIIA (180 aa)) constitute a Guanylate kinase-like domain. An ATP-binding site is contributed by 12–19 (GPSGVGKG).

This sequence belongs to the guanylate kinase family.

It is found in the cytoplasm. The enzyme catalyses GMP + ATP = GDP + ADP. Essential for recycling GMP and indirectly, cGMP. This is Guanylate kinase from Enterococcus faecalis (strain ATCC 700802 / V583).